A 751-amino-acid chain; its full sequence is Lysine decarboxylase LdcA (751 aa).

Belongs to the Orn/Lys/Arg decarboxylase class-I family. In terms of assembly, homodecamer.

It carries out the reaction L-lysine + H(+) = cadaverine + CO2. Its function is as follows. Plays an essential role in lysine utilization by acting as a lysine decarboxylase. The chain is Lysine decarboxylase LdcA from Pseudomonas aeruginosa (strain ATCC 15692 / DSM 22644 / CIP 104116 / JCM 14847 / LMG 12228 / 1C / PRS 101 / PAO1).